A 257-amino-acid chain; its full sequence is Acetylglutamate kinase (257 aa).

Residues 43–44 (GG), R65, and N157 contribute to the substrate site. ATP is bound by residues 180–185 (DVSGIL) and 208–210 (IIT).

Belongs to the acetylglutamate kinase family. ArgB subfamily. As to quaternary structure, homodimer.

Its subcellular location is the cytoplasm. The enzyme catalyses N-acetyl-L-glutamate + ATP = N-acetyl-L-glutamyl 5-phosphate + ADP. It participates in amino-acid biosynthesis; L-arginine biosynthesis; N(2)-acetyl-L-ornithine from L-glutamate: step 2/4. Functionally, catalyzes the ATP-dependent phosphorylation of N-acetyl-L-glutamate. This is Acetylglutamate kinase from Klebsiella pneumoniae (strain 342).